A 569-amino-acid polypeptide reads, in one-letter code: TBCC domain-containing protein 1 (569 aa).

Positions 304–435 (PRSHRIVVMS…LEDHMARTGL (132 aa)) constitute a C-CAP/cofactor C-like domain.

It belongs to the TBCC family.

It localises to the cytoplasm. The protein resides in the cytoskeleton. Its subcellular location is the microtubule organizing center. It is found in the centrosome. The protein localises to the spindle pole. Plays a role in the regulation of centrosome and Golgi apparatus positioning, with consequences on cell shape and cell migration. This Rattus norvegicus (Rat) protein is TBCC domain-containing protein 1 (Tbccd1).